The sequence spans 181 residues: ADP-ribosylation factor 1 (181 aa).

Gly2 is lipidated: N-myristoyl glycine. GTP contacts are provided by residues 25-32 (LDGAGKTT), Thr48, Gly70, 126-129 (NKQD), and 160-161 (AT). Lys127 is covalently cross-linked (Glycyl lysine isopeptide (Lys-Gly) (interchain with G-Cter in ubiquitin)).

This sequence belongs to the small GTPase superfamily. Arf family. Interacts with RUD3. Interacts with VPS13 (via C-terminal part); the interaction is direct.

The protein localises to the golgi apparatus. It carries out the reaction GTP + H2O = GDP + phosphate + H(+). Functionally, GTP-binding protein involved in Golgi vesicle trafficking. May modulate vesicle budding and uncoating within the Golgi apparatus. May recruit the lipid transfer protein VPS13 to Golgi membranes. Recruits polyadenylate-binding protein PAB1 to COPI vesicles, and this is required for correct localization of the asymmetrically distributed ASH1 mRNA. In Saccharomyces cerevisiae (strain ATCC 204508 / S288c) (Baker's yeast), this protein is ADP-ribosylation factor 1 (ARF1).